The primary structure comprises 271 residues: 3-methyl-2-oxobutanoate hydroxymethyltransferase (271 aa).

Positions 51 and 90 each coordinate Mg(2+). 3-methyl-2-oxobutanoate contacts are provided by residues 51-52, D90, and K118; that span reads DS. E120 contacts Mg(2+). The Proton acceptor role is filled by E186.

This sequence belongs to the PanB family. Homodecamer; pentamer of dimers. Requires Mg(2+) as cofactor.

It is found in the cytoplasm. The catalysed reaction is 3-methyl-2-oxobutanoate + (6R)-5,10-methylene-5,6,7,8-tetrahydrofolate + H2O = 2-dehydropantoate + (6S)-5,6,7,8-tetrahydrofolate. Its pathway is cofactor biosynthesis; (R)-pantothenate biosynthesis; (R)-pantoate from 3-methyl-2-oxobutanoate: step 1/2. Functionally, catalyzes the reversible reaction in which hydroxymethyl group from 5,10-methylenetetrahydrofolate is transferred onto alpha-ketoisovalerate to form ketopantoate. This Xanthomonas campestris pv. campestris (strain B100) protein is 3-methyl-2-oxobutanoate hydroxymethyltransferase.